A 198-amino-acid polypeptide reads, in one-letter code: uncharacterized protein (198 aa).

A coiled-coil region spans residues 20–58 (ERVRRDEELARLSADKEQAKNDLEESKRRIARLRGTVYE). The interval 144–198 (LSNRKTKNPESDRRRQSRKKKSTQIQASDEMKHRRHHVHKVHHYSQKQSSSTTRR) is disordered. The segment covering 176 to 188 (HRRHHVHKVHHYS) has biased composition (basic residues). Polar residues predominate over residues 189 to 198 (QKQSSSTTRR).

It is found in the nucleus. It localises to the nucleolus. This is an uncharacterized protein from Schizosaccharomyces pombe (strain 972 / ATCC 24843) (Fission yeast).